The sequence spans 208 residues: Uracil phosphoribosyltransferase (208 aa).

5-phospho-alpha-D-ribose 1-diphosphate contacts are provided by residues R78, R103, and D130–S138. Uracil is bound by residues I193 and G198–A200. Position 199 (D199) interacts with 5-phospho-alpha-D-ribose 1-diphosphate.

It belongs to the UPRTase family. Mg(2+) is required as a cofactor.

It catalyses the reaction UMP + diphosphate = 5-phospho-alpha-D-ribose 1-diphosphate + uracil. It functions in the pathway pyrimidine metabolism; UMP biosynthesis via salvage pathway; UMP from uracil: step 1/1. With respect to regulation, allosterically activated by GTP. In terms of biological role, catalyzes the conversion of uracil and 5-phospho-alpha-D-ribose 1-diphosphate (PRPP) to UMP and diphosphate. The chain is Uracil phosphoribosyltransferase from Vibrio parahaemolyticus serotype O3:K6 (strain RIMD 2210633).